The following is a 503-amino-acid chain: E3 ubiquitin-protein ligase IE61 (503 aa).

The segment at 19–58 (CAICMSAISGLGKTLPCLHDFCFVCIQTWTSTSAQCPLCR) adopts an RING-type zinc-finger fold. 3 disordered regions span residues 175 to 194 (AVIT…PSSR), 367 to 418 (SGPI…LFVD), and 445 to 503 (AALP…VRRK). A compositionally biased stretch (polar residues) spans 375 to 388 (GGSTSQDTSVSNIH). Residues 389 to 403 (RSPPGGSSTQPSSGR) are compositionally biased toward low complexity. Positions 404-414 (RPGRPKGVKRR) are enriched in basic residues. Residues 471 to 480 (PSTSGSSPSP) are compositionally biased toward low complexity.

Interacts with host BTRC; this interaction seems to inactivate SCF-mediated protein degradation in general.

It carries out the reaction S-ubiquitinyl-[E2 ubiquitin-conjugating enzyme]-L-cysteine + [acceptor protein]-L-lysine = [E2 ubiquitin-conjugating enzyme]-L-cysteine + N(6)-ubiquitinyl-[acceptor protein]-L-lysine.. Its function is as follows. RING-finger E3 ubiquitin ligase that degrades host SP100, one of the major components of ND10 nuclear bodies, thereby disrupting the organization of these bodies. Also plays a role in the inhibition of host NF-kappa-B pathway by blocking the SCF(BTRC)-mediated addition of ubiquitin chains to host IkappaBalpha/NFKBIA, thereby interfering with its degradation. The polypeptide is E3 ubiquitin-protein ligase IE61 (Cercopithecine herpesvirus 9 (strain DHV) (CeHV-9)).